Consider the following 98-residue polypeptide: Large ribosomal subunit protein mL53 (98 aa).

This sequence belongs to the mitochondrion-specific ribosomal protein mL53 family. As to quaternary structure, component of the mitochondrial large ribosomal subunit (mt-LSU). Mature N.crassa 74S mitochondrial ribosomes consist of a small (37S) and a large (54S) subunit. The 37S small subunit contains a 16S ribosomal RNA (16S mt-rRNA) and 32 different proteins. The 54S large subunit contains a 23S rRNA (23S mt-rRNA) and 42 different proteins.

It localises to the mitochondrion. Its function is as follows. Component of the mitochondrial ribosome (mitoribosome), a dedicated translation machinery responsible for the synthesis of mitochondrial genome-encoded proteins, including at least some of the essential transmembrane subunits of the mitochondrial respiratory chain. The mitoribosomes are attached to the mitochondrial inner membrane and translation products are cotranslationally integrated into the membrane. The protein is Large ribosomal subunit protein mL53 (mrpl44) of Neurospora crassa (strain ATCC 24698 / 74-OR23-1A / CBS 708.71 / DSM 1257 / FGSC 987).